Here is a 71-residue protein sequence, read N- to C-terminus: 26S proteasome complex subunit rpn15 (71 aa).

The disordered stretch occupies residues 1–38 (MSRAALPSLENLEDDDEFEDFATENWPMKDTELDTGDD). The segment covering 11–22 (NLEDDDEFEDFA) has biased composition (acidic residues). The interval 16 to 25 (DEFEDFATEN) is UBS-II. The interval 38–49 (DTLWENNWDDED) is UBS-I.

The protein belongs to the DSS1/SEM1 family. Interacts with mlo3, rae1, nup98/nup189 and nup146. Interacts with rad24. Interacts (via UBSs) with ubiquitin (ubi3/ubi5).

The protein resides in the cytoplasm. It localises to the nucleus. Functionally, versatile protein that might stabilize multiple protein complexes involved in diverse pathways. Subunit of the 26S proteasome which plays a role in ubiquitin-dependent proteolysis. Acts as a ubiquitin receptor of the 26S proteasome, by interacting with ubiquitin chains linked by 'Lys-63' and 'Lys-48'. Involved in nuclear export of specific sets of mRNAs. Links the mRNA adapter mlo3 to rae1 for targeting mRNA-protein complex to the proteins of the nucleoporin complex (NPC). Involved in recombinational repair of DNA. Plays a critical role in linking repair and checkpoint factors to damaged DNA sites by specifically recruiting rad24 and cdc25 to the DSBs. The polypeptide is 26S proteasome complex subunit rpn15 (rpn15) (Schizosaccharomyces pombe (strain 972 / ATCC 24843) (Fission yeast)).